The primary structure comprises 799 residues: Lon protease 4 (799 aa).

A Lon N-terminal domain is found at 15 to 204; it reads FPLLPLRTGV…RVAGLLAEAS (190 aa). 356–363 provides a ligand contact to ATP; the sequence is GPPGVGKT. Residues 595–776 form the Lon proteolytic domain; sequence TSVAGVATGL…SQVIAAALEE (182 aa). Residues Ser-682 and Lys-725 contribute to the active site.

It belongs to the peptidase S16 family. Homohexamer. Organized in a ring with a central cavity.

Its subcellular location is the cytoplasm. It catalyses the reaction Hydrolysis of proteins in presence of ATP.. Functionally, ATP-dependent serine protease that mediates the selective degradation of mutant and abnormal proteins as well as certain short-lived regulatory proteins. Required for cellular homeostasis and for survival from DNA damage and developmental changes induced by stress. Degrades polypeptides processively to yield small peptide fragments that are 5 to 10 amino acids long. Binds to DNA in a double-stranded, site-specific manner. This chain is Lon protease 4, found in Sorangium cellulosum (strain So ce56) (Polyangium cellulosum (strain So ce56)).